A 200-amino-acid polypeptide reads, in one-letter code: Ribonuclease T2 (200 aa).

A disulfide bond links Cys-17 and Cys-22. His-32 is an active-site residue. A disulfide bridge links Cys-42 with Cys-89. N-linked (GlcNAc...) asparagine glycans are attached at residues Asn-43 and Asn-73. Residues Glu-82 and His-86 contribute to the active site. Asn-116 carries an N-linked (GlcNAc...) asparagine glycan. Disulfide bonds link Cys-152–Cys-188 and Cys-170–Cys-180.

It belongs to the RNase T2 family.

The protein resides in the secreted. Its subcellular location is the lysosome lumen. It localises to the endoplasmic reticulum lumen. It is found in the mitochondrion intermembrane space. It catalyses the reaction a ribonucleotidyl-ribonucleotide-RNA + H2O = a 3'-end 3'-phospho-ribonucleotide-RNA + a 5'-end dephospho-ribonucleoside-RNA + H(+). The catalysed reaction is an adenylyl-uridine-RNA = a 3'-end 2',3'-cyclophospho-AMP-RNA + a 5'-end dephospho-uridine-RNA. The enzyme catalyses a guanylyl-uridine-RNA = a 3'-end 2',3'-cyclophospho-GMP-RNA + a 5'-end dephospho-uridine-RNA. Inhibited by Zn(2+) and Cu(2+). Its function is as follows. Ribonuclease that plays an essential role in innate immune response by recognizing and degrading RNAs from microbial pathogens that are subsequently sensed by TLR8. Cleaves preferentially single-stranded RNA molecules between purine and uridine residues, which critically contributes to the supply of catabolic uridine and the generation of purine-2',3'-cyclophosphate-terminated oligoribonucleotides. In turn, RNase T2 degradation products promote the RNA-dependent activation of TLR8. In plasmacytoid dendritic cells, it cooperates with PLD3 or PLD4 5'-&gt;3' exonucleases to process RNA fragments and release 2',3'-cyclic guanosine monophosphate (2',3'-cGMP), a potent stimulatory ligand for TLR7. Also plays a key role in degradation of mitochondrial RNA and processing of non-coding RNA imported from the cytosol into mitochondria. Participates as well in degradation of mitochondrion-associated cytosolic rRNAs. This chain is Ribonuclease T2 (RNASET2), found in Sus scrofa (Pig).